The sequence spans 212 residues: Ribosomal RNA small subunit methyltransferase G (212 aa).

S-adenosyl-L-methionine-binding positions include G80, L85, 131–132 (AE), and R146.

The protein belongs to the methyltransferase superfamily. RNA methyltransferase RsmG family.

Its subcellular location is the cytoplasm. It catalyses the reaction guanosine(527) in 16S rRNA + S-adenosyl-L-methionine = N(7)-methylguanosine(527) in 16S rRNA + S-adenosyl-L-homocysteine. Functionally, specifically methylates the N7 position of guanine in position 527 of 16S rRNA. In Stenotrophomonas maltophilia (strain R551-3), this protein is Ribosomal RNA small subunit methyltransferase G.